Here is a 622-residue protein sequence, read N- to C-terminus: Chaperone protein HscA homolog (622 aa).

It belongs to the heat shock protein 70 family.

Functionally, chaperone involved in the maturation of iron-sulfur cluster-containing proteins. Has a low intrinsic ATPase activity which is markedly stimulated by HscB. The sequence is that of Chaperone protein HscA homolog from Aromatoleum aromaticum (strain DSM 19018 / LMG 30748 / EbN1) (Azoarcus sp. (strain EbN1)).